Consider the following 320-residue polypeptide: Mitochondrial glutamate carrier 2 (320 aa).

Solcar repeat units lie at residues 11–97, 105–215, and 224–313; these read LSIT…LRQL, RNLK…LNQL, and ASFT…GIGE. 3 consecutive transmembrane segments (helical) span residues 17–37, 66–86, and 111–131; these read LING…IDLA, FLGM…EKAI, and MLAG…MEML. Residue Ser-150 is modified to Phosphoserine. The next 3 helical transmembrane spans lie at 190–210, 230–250, and 293–313; these read GLGA…PLFA, FVAG…LDVL, and ALVI…GIGE.

Belongs to the mitochondrial carrier (TC 2.A.29) family.

The protein localises to the mitochondrion inner membrane. The catalysed reaction is L-glutamate(in) + H(+)(in) = L-glutamate(out) + H(+)(out). In terms of biological role, responsible for the transport of glutamate from the cytosol into the mitochondrial matrix with the concomitant import of a proton (symport system). The protein is Mitochondrial glutamate carrier 2 (Slc25a18) of Rattus norvegicus (Rat).